The chain runs to 265 residues: Phosphonates import ATP-binding protein PhnC 1 (265 aa).

The 245-residue stretch at 3–247 folds into the ABC transporter domain; it reads LRLSAIDLRH…HLDTLYANEQ (245 aa). 36 to 43 provides a ligand contact to ATP; the sequence is GPSGAGKT.

It belongs to the ABC transporter superfamily. Phosphonates importer (TC 3.A.1.9.1) family. The complex is composed of two ATP-binding proteins (PhnC), two transmembrane proteins (PhnE) and a solute-binding protein (PhnD).

The protein localises to the cell inner membrane. It carries out the reaction phosphonate(out) + ATP + H2O = phosphonate(in) + ADP + phosphate + H(+). Part of the ABC transporter complex PhnCDE involved in phosphonates import. Responsible for energy coupling to the transport system. The sequence is that of Phosphonates import ATP-binding protein PhnC 1 from Pseudomonas syringae pv. tomato (strain ATCC BAA-871 / DC3000).